We begin with the raw amino-acid sequence, 318 residues long: Ribosomal RNA small subunit methyltransferase H (318 aa).

S-adenosyl-L-methionine contacts are provided by residues 37-39 (GGH), D57, F83, D104, and Q111.

This sequence belongs to the methyltransferase superfamily. RsmH family.

The protein localises to the cytoplasm. The enzyme catalyses cytidine(1402) in 16S rRNA + S-adenosyl-L-methionine = N(4)-methylcytidine(1402) in 16S rRNA + S-adenosyl-L-homocysteine + H(+). Functionally, specifically methylates the N4 position of cytidine in position 1402 (C1402) of 16S rRNA. This is Ribosomal RNA small subunit methyltransferase H from Neisseria gonorrhoeae (strain NCCP11945).